The chain runs to 173 residues: Oleosin 18.5 kDa (173 aa).

The tract at residues 1–45 (MADTARGTHHDIIGRDQYPMMGRDRDQYQMSGRGSDYSKSRQIAK) is polar. Positions 46 to 117 (AATAVTAGGS…AAITVFSWIY (72 aa)) are hydrophobic. The next 3 helical transmembrane spans lie at 54-74 (GSLL…LTVA), 76-96 (PLLV…ALLI), and 97-117 (TGFL…SWIY). Residues 151-173 (YYGQQHTGGEHDRDRTRGGQHTT) form a disordered region. Over residues 158–167 (GGEHDRDRTR) the composition is skewed to basic and acidic residues.

It belongs to the oleosin family.

It is found in the lipid droplet. The protein localises to the membrane. Its function is as follows. May have a structural role to stabilize the lipid body during desiccation of the seed by preventing coalescence of the oil. Probably interacts with both lipid and phospholipid moieties of lipid bodies. May also provide recognition signals for specific lipase anchorage in lipolysis during seedling growth. The chain is Oleosin 18.5 kDa from Arabidopsis thaliana (Mouse-ear cress).